Here is a 72-residue protein sequence, read N- to C-terminus: Large ribosomal subunit protein bL31 (72 aa).

Residues Cys17, Cys19, Cys37, and Cys40 each coordinate Zn(2+).

It belongs to the bacterial ribosomal protein bL31 family. Type A subfamily. In terms of assembly, part of the 50S ribosomal subunit. Zn(2+) serves as cofactor.

Binds the 23S rRNA. The sequence is that of Large ribosomal subunit protein bL31 from Clostridium botulinum (strain Loch Maree / Type A3).